Consider the following 60-residue polypeptide: UPF0434 protein Mfla_2088 (60 aa).

The protein belongs to the UPF0434 family.

The chain is UPF0434 protein Mfla_2088 from Methylobacillus flagellatus (strain ATCC 51484 / DSM 6875 / VKM B-1610 / KT).